We begin with the raw amino-acid sequence, 196 residues long: Lipoprotein signal peptidase (196 aa).

Transmembrane regions (helical) follow at residues 43 to 63 (LMLK…GISF), 75 to 95 (AVFI…MVCS), and 100 to 120 (GFAG…DRLF). Residues Asp126 and Asp144 contribute to the active site. Residues 135-155 (YSFPVFNLADCFITIGVIILI) traverse the membrane as a helical segment.

This sequence belongs to the peptidase A8 family.

It localises to the cell inner membrane. It carries out the reaction Release of signal peptides from bacterial membrane prolipoproteins. Hydrolyzes -Xaa-Yaa-Zaa-|-(S,diacylglyceryl)Cys-, in which Xaa is hydrophobic (preferably Leu), and Yaa (Ala or Ser) and Zaa (Gly or Ala) have small, neutral side chains.. Its pathway is protein modification; lipoprotein biosynthesis (signal peptide cleavage). Functionally, this protein specifically catalyzes the removal of signal peptides from prolipoproteins. This is Lipoprotein signal peptidase from Rickettsia canadensis (strain McKiel).